Here is a 257-residue protein sequence, read N- to C-terminus: Small ribosomal subunit protein uS2 (257 aa).

A disordered region spans residues 237–257 (MDEADGSEAEPEDPAAPESAE). A compositionally biased stretch (acidic residues) spans 240 to 257 (ADGSEAEPEDPAAPESAE).

The protein belongs to the universal ribosomal protein uS2 family.

This chain is Small ribosomal subunit protein uS2, found in Chlorobium phaeovibrioides (strain DSM 265 / 1930) (Prosthecochloris vibrioformis (strain DSM 265)).